The primary structure comprises 466 residues: MDQSSRYVNLALKEEDLIAGGEHVLCAYIMKPKAGYGYVATAAHFAAESSTGTNVEVCTTDDFTRGVDALVYEVDEARELTKIAYPVALFHRNITDGKAMIASFLTLTMGNNQGMGDVEYAKMHDFYVPEAYRALFDGPSVNISALWKVLGRPEVDGGLVVGTIIKPKLGLRPKPFAEACHAFWLGGDFIKNDEPQGNQPFAPLRDTIALVADAMRRAQDETGEAKLFSANITADDPFEIIARGEYVLETFGENASHVALLVDGYVAGAAAITTARRRFPDNFLHYHRAGHGAVTSPQSKRGYTAFVHCKMARLQGASGIHTGTMGFGKMEGESSDRAIAYMLTQDEAQGPFYRQSWGGMKACTPIISGGMNALRMPGFFENLGNANVILTAGGGAFGHIDGPVAGARSLRQAWQAWRDGVPVLDYAREHKELARAFESFPGDADQIYPGWRKALGVEDTRSALPA.

Asn-111 is a binding site for substrate. Residue Lys-166 is the Proton acceptor of the active site. Position 168 (Lys-168) interacts with substrate. Lys-191, Asp-193, and Glu-194 together coordinate Mg(2+). At Lys-191 the chain carries N6-carboxylysine. Catalysis depends on His-287, which acts as the Proton acceptor. Residues Arg-288, His-321, and Ser-368 each coordinate substrate.

The protein belongs to the RuBisCO large chain family. Type II subfamily. As to quaternary structure, homodimer. Requires Mg(2+) as cofactor.

It carries out the reaction 2 (2R)-3-phosphoglycerate + 2 H(+) = D-ribulose 1,5-bisphosphate + CO2 + H2O. The enzyme catalyses D-ribulose 1,5-bisphosphate + O2 = 2-phosphoglycolate + (2R)-3-phosphoglycerate + 2 H(+). Functionally, ruBisCO catalyzes two reactions: the carboxylation of D-ribulose 1,5-bisphosphate, the primary event in carbon dioxide fixation, as well as the oxidative fragmentation of the pentose substrate. Both reactions occur simultaneously and in competition at the same active site. This chain is Ribulose bisphosphate carboxylase (cbbM), found in Rhodospirillum rubrum.